Here is a 155-residue protein sequence, read N- to C-terminus: Small ribosomal subunit protein uS7c (155 aa).

This sequence belongs to the universal ribosomal protein uS7 family. In terms of assembly, part of the 30S ribosomal subunit.

The protein resides in the plastid. Its subcellular location is the chloroplast. In terms of biological role, one of the primary rRNA binding proteins, it binds directly to 16S rRNA where it nucleates assembly of the head domain of the 30S subunit. In Saruma henryi (Upright wild ginger), this protein is Small ribosomal subunit protein uS7c (rps7).